We begin with the raw amino-acid sequence, 197 residues long: Xanthine phosphoribosyltransferase (197 aa).

Xanthine contacts are provided by Leu-20 and Thr-27. Residue 128–132 coordinates 5-phospho-alpha-D-ribose 1-diphosphate; that stretch reads ANGQA. Lys-156 provides a ligand contact to xanthine.

The protein belongs to the purine/pyrimidine phosphoribosyltransferase family. Xpt subfamily. As to quaternary structure, homodimer.

The protein resides in the cytoplasm. The catalysed reaction is XMP + diphosphate = xanthine + 5-phospho-alpha-D-ribose 1-diphosphate. It functions in the pathway purine metabolism; XMP biosynthesis via salvage pathway; XMP from xanthine: step 1/1. Functionally, converts the preformed base xanthine, a product of nucleic acid breakdown, to xanthosine 5'-monophosphate (XMP), so it can be reused for RNA or DNA synthesis. This is Xanthine phosphoribosyltransferase from Lactococcus lactis subsp. lactis (strain IL1403) (Streptococcus lactis).